We begin with the raw amino-acid sequence, 276 residues long: WIMGHMVNEIYQIDEFVDLGANSIETDITFDDDAIAEYTYHGVPCDCKRWCTKWENVNDFLHGLQRATTPGNSKYRPELVLVVFDLKTGDLSSSTAYKAGNMFAQKLFIHYWNAGNNGGRAYIVLSIPDIDHYAFISGFREAFKNSDHADLLDKVGYDFSGNDDLSATRNALNKGGVKDREHVWQSDGITNCIGRGLGRVRDAVANRDSSNGYINKVYVWTIEKYVSVRDAFDAGVDGIMTNEPDVIVDVLNESAYSSKFRMATYEDNPWETFKYK.

Histidine 5 is a catalytic residue. Mg(2+) is bound by residues glutamate 25 and aspartate 27. Residue histidine 41 is the Nucleophile of the active site. 2 disulfides stabilise this stretch: cysteine 45/cysteine 51 and cysteine 47/cysteine 192. Aspartate 85 provides a ligand contact to Mg(2+).

Belongs to the arthropod phospholipase D family. Class II subfamily. Mg(2+) is required as a cofactor. As to expression, expressed by the venom gland.

It is found in the secreted. The enzyme catalyses an N-(acyl)-sphingosylphosphocholine = an N-(acyl)-sphingosyl-1,3-cyclic phosphate + choline. The catalysed reaction is an N-(acyl)-sphingosylphosphoethanolamine = an N-(acyl)-sphingosyl-1,3-cyclic phosphate + ethanolamine. It catalyses the reaction a 1-acyl-sn-glycero-3-phosphocholine = a 1-acyl-sn-glycero-2,3-cyclic phosphate + choline. It carries out the reaction a 1-acyl-sn-glycero-3-phosphoethanolamine = a 1-acyl-sn-glycero-2,3-cyclic phosphate + ethanolamine. Its function is as follows. Dermonecrotic toxins cleave the phosphodiester linkage between the phosphate and headgroup of certain phospholipids (sphingolipid and lysolipid substrates), forming an alcohol (often choline) and a cyclic phosphate. This toxin acts on sphingomyelin (SM). It may also act on ceramide phosphoethanolamine (CPE), lysophosphatidylcholine (LPC) and lysophosphatidylethanolamine (LPE), but not on lysophosphatidylserine (LPS), and lysophosphatidylglycerol (LPG). It acts by transphosphatidylation, releasing exclusively cyclic phosphate products as second products. Induces dermonecrosis, hemolysis, increased vascular permeability, edema, inflammatory response, and platelet aggregation. In Loxosceles laeta (South American recluse spider), this protein is Dermonecrotic toxin LlSicTox-alphaIV3.